Here is a 379-residue protein sequence, read N- to C-terminus: Sensor histidine kinase YhcY (379 aa).

The 189-residue stretch at 185–373 (RLAQELHDSV…KLSIRLPLKS (189 aa)) folds into the Histidine kinase domain. Phosphohistidine; by autocatalysis is present on H191.

The enzyme catalyses ATP + protein L-histidine = ADP + protein N-phospho-L-histidine.. Functionally, member of the two-component regulatory system YhcY/YhcZ. Probably activates YhcZ by phosphorylation. This Bacillus subtilis (strain 168) protein is Sensor histidine kinase YhcY (yhcY).